The sequence spans 312 residues: Glycine--tRNA ligase alpha subunit (312 aa).

This sequence belongs to the class-II aminoacyl-tRNA synthetase family. Tetramer of two alpha and two beta subunits.

The protein localises to the cytoplasm. It carries out the reaction tRNA(Gly) + glycine + ATP = glycyl-tRNA(Gly) + AMP + diphosphate. In Nostoc punctiforme (strain ATCC 29133 / PCC 73102), this protein is Glycine--tRNA ligase alpha subunit.